Here is a 234-residue protein sequence, read N- to C-terminus: Large ribosomal subunit protein uL1 (234 aa).

The protein belongs to the universal ribosomal protein uL1 family. Part of the 50S ribosomal subunit.

Functionally, binds directly to 23S rRNA. The L1 stalk is quite mobile in the ribosome, and is involved in E site tRNA release. Protein L1 is also a translational repressor protein, it controls the translation of the L11 operon by binding to its mRNA. This chain is Large ribosomal subunit protein uL1, found in Anaeromyxobacter dehalogenans (strain 2CP-C).